The following is a 416-amino-acid chain: Glutamyl-tRNA reductase (416 aa).

Substrate is bound by residues 49 to 52 (TCNR), S105, 110 to 112 (EPQ), and Q116. C50 acts as the Nucleophile in catalysis. Position 185–190 (185–190 (GAGETI)) interacts with NADP(+).

Belongs to the glutamyl-tRNA reductase family. In terms of assembly, homodimer.

It catalyses the reaction (S)-4-amino-5-oxopentanoate + tRNA(Glu) + NADP(+) = L-glutamyl-tRNA(Glu) + NADPH + H(+). The protein operates within porphyrin-containing compound metabolism; protoporphyrin-IX biosynthesis; 5-aminolevulinate from L-glutamyl-tRNA(Glu): step 1/2. Its function is as follows. Catalyzes the NADPH-dependent reduction of glutamyl-tRNA(Glu) to glutamate 1-semialdehyde (GSA). This Shewanella baltica (strain OS185) protein is Glutamyl-tRNA reductase.